The primary structure comprises 311 residues: Ribosomal RNA small subunit methyltransferase H (311 aa).

S-adenosyl-L-methionine contacts are provided by residues 34–36 (GGH), aspartate 54, phenylalanine 80, aspartate 104, and glutamine 111.

It belongs to the methyltransferase superfamily. RsmH family.

It localises to the cytoplasm. The enzyme catalyses cytidine(1402) in 16S rRNA + S-adenosyl-L-methionine = N(4)-methylcytidine(1402) in 16S rRNA + S-adenosyl-L-homocysteine + H(+). Its function is as follows. Specifically methylates the N4 position of cytidine in position 1402 (C1402) of 16S rRNA. The protein is Ribosomal RNA small subunit methyltransferase H of Teredinibacter turnerae (strain ATCC 39867 / T7901).